A 116-amino-acid chain; its full sequence is uncharacterized protein (116 aa).

This is an uncharacterized protein from Methanocaldococcus jannaschii (strain ATCC 43067 / DSM 2661 / JAL-1 / JCM 10045 / NBRC 100440) (Methanococcus jannaschii).